Consider the following 521-residue polypeptide: ATP synthase subunit beta (521 aa).

Composition is skewed to low complexity over residues 1-21 (MAKAATPKTTAAAEAKPAAKA) and 28-42 (PKTTAAAKPAATKSG). Positions 1-42 (MAKAATPKTTAAAEAKPAAKAPAKKAAPKTTAAAKPAATKSG) are disordered. An ATP-binding site is contributed by 199 to 206 (GGAGVGKT).

The protein belongs to the ATPase alpha/beta chains family. F-type ATPases have 2 components, CF(1) - the catalytic core - and CF(0) - the membrane proton channel. CF(1) has five subunits: alpha(3), beta(3), gamma(1), delta(1), epsilon(1). CF(0) has three main subunits: a(1), b(2) and c(9-12). The alpha and beta chains form an alternating ring which encloses part of the gamma chain. CF(1) is attached to CF(0) by a central stalk formed by the gamma and epsilon chains, while a peripheral stalk is formed by the delta and b chains.

The protein resides in the cell inner membrane. It catalyses the reaction ATP + H2O + 4 H(+)(in) = ADP + phosphate + 5 H(+)(out). Its function is as follows. Produces ATP from ADP in the presence of a proton gradient across the membrane. The catalytic sites are hosted primarily by the beta subunits. The polypeptide is ATP synthase subunit beta (Brucella abortus (strain 2308)).